The primary structure comprises 116 residues: Large ribosomal subunit protein bL20 (116 aa).

It belongs to the bacterial ribosomal protein bL20 family.

Binds directly to 23S ribosomal RNA and is necessary for the in vitro assembly process of the 50S ribosomal subunit. It is not involved in the protein synthesizing functions of that subunit. This Synechococcus elongatus (strain ATCC 33912 / PCC 7942 / FACHB-805) (Anacystis nidulans R2) protein is Large ribosomal subunit protein bL20.